A 316-amino-acid chain; its full sequence is Acetyl-coenzyme A carboxylase carboxyl transferase subunit alpha (316 aa).

A CoA carboxyltransferase C-terminal domain is found at Arg39 to Met293.

The protein belongs to the AccA family. As to quaternary structure, acetyl-CoA carboxylase is a heterohexamer composed of biotin carboxyl carrier protein (AccB), biotin carboxylase (AccC) and two subunits each of ACCase subunit alpha (AccA) and ACCase subunit beta (AccD).

The protein resides in the cytoplasm. It catalyses the reaction N(6)-carboxybiotinyl-L-lysyl-[protein] + acetyl-CoA = N(6)-biotinyl-L-lysyl-[protein] + malonyl-CoA. It participates in lipid metabolism; malonyl-CoA biosynthesis; malonyl-CoA from acetyl-CoA: step 1/1. In terms of biological role, component of the acetyl coenzyme A carboxylase (ACC) complex. First, biotin carboxylase catalyzes the carboxylation of biotin on its carrier protein (BCCP) and then the CO(2) group is transferred by the carboxyltransferase to acetyl-CoA to form malonyl-CoA. The protein is Acetyl-coenzyme A carboxylase carboxyl transferase subunit alpha of Pseudomonas aeruginosa (strain UCBPP-PA14).